The following is a 369-amino-acid chain: tRNA/tmRNA (uracil-C(5))-methyltransferase (369 aa).

S-adenosyl-L-methionine-binding residues include glutamine 193, tyrosine 221, asparagine 226, glutamate 242, and aspartate 302. Residue cysteine 327 is the Nucleophile of the active site. The active-site Proton acceptor is the glutamate 361.

It belongs to the class I-like SAM-binding methyltransferase superfamily. RNA M5U methyltransferase family. TrmA subfamily.

It catalyses the reaction uridine(54) in tRNA + S-adenosyl-L-methionine = 5-methyluridine(54) in tRNA + S-adenosyl-L-homocysteine + H(+). The catalysed reaction is uridine(341) in tmRNA + S-adenosyl-L-methionine = 5-methyluridine(341) in tmRNA + S-adenosyl-L-homocysteine + H(+). Dual-specificity methyltransferase that catalyzes the formation of 5-methyluridine at position 54 (m5U54) in all tRNAs, and that of position 341 (m5U341) in tmRNA (transfer-mRNA). In Sulfurimonas denitrificans (strain ATCC 33889 / DSM 1251) (Thiomicrospira denitrificans (strain ATCC 33889 / DSM 1251)), this protein is tRNA/tmRNA (uracil-C(5))-methyltransferase.